The chain runs to 511 residues: Probable mannosyl-oligosaccharide alpha-1,2-mannosidase 1B (511 aa).

The N-terminal stretch at 1-18 (MHLPSLSLAWALAGSSLA) is a signal peptide. 2 N-linked (GlcNAc...) asparagine glycosylation sites follow: asparagine 90 and asparagine 177. Cysteine 327 and cysteine 356 are oxidised to a cystine. Glutamate 370 (proton donor) is an active-site residue. An N-linked (GlcNAc...) asparagine glycan is attached at asparagine 433. Threonine 501 is a binding site for Ca(2+).

The protein belongs to the glycosyl hydrolase 47 family. As to quaternary structure, monomer. Ca(2+) is required as a cofactor. Requires Mg(2+) as cofactor.

The protein localises to the cytoplasmic vesicle lumen. The enzyme catalyses N(4)-(alpha-D-Man-(1-&gt;2)-alpha-D-Man-(1-&gt;2)-alpha-D-Man-(1-&gt;3)-[alpha-D-Man-(1-&gt;2)-alpha-D-Man-(1-&gt;3)-[alpha-D-Man-(1-&gt;2)-alpha-D-Man-(1-&gt;6)]-alpha-D-Man-(1-&gt;6)]-beta-D-Man-(1-&gt;4)-beta-D-GlcNAc-(1-&gt;4)-beta-D-GlcNAc)-L-asparaginyl-[protein] (N-glucan mannose isomer 9A1,2,3B1,2,3) + 4 H2O = N(4)-(alpha-D-Man-(1-&gt;3)-[alpha-D-Man-(1-&gt;3)-[alpha-D-Man-(1-&gt;6)]-alpha-D-Man-(1-&gt;6)]-beta-D-Man-(1-&gt;4)-beta-D-GlcNAc-(1-&gt;4)-beta-D-GlcNAc)-L-asparaginyl-[protein] (N-glucan mannose isomer 5A1,2) + 4 beta-D-mannose. It carries out the reaction N(4)-(alpha-D-Man-(1-&gt;2)-alpha-D-Man-(1-&gt;2)-alpha-D-Man-(1-&gt;3)-[alpha-D-Man-(1-&gt;3)-[alpha-D-Man-(1-&gt;2)-alpha-D-Man-(1-&gt;6)]-alpha-D-Man-(1-&gt;6)]-beta-D-Man-(1-&gt;4)-beta-D-GlcNAc-(1-&gt;4)-beta-D-GlcNAc)-L-asparaginyl-[protein] (N-glucan mannose isomer 8A1,2,3B1,3) + 3 H2O = N(4)-(alpha-D-Man-(1-&gt;3)-[alpha-D-Man-(1-&gt;3)-[alpha-D-Man-(1-&gt;6)]-alpha-D-Man-(1-&gt;6)]-beta-D-Man-(1-&gt;4)-beta-D-GlcNAc-(1-&gt;4)-beta-D-GlcNAc)-L-asparaginyl-[protein] (N-glucan mannose isomer 5A1,2) + 3 beta-D-mannose. It participates in protein modification; protein glycosylation. Involved in the maturation of Asn-linked oligosaccharides. Progressively trims alpha-1,2-linked mannose residues from Man(9)GlcNAc(2) to produce Man(5)GlcNAc(2). The chain is Probable mannosyl-oligosaccharide alpha-1,2-mannosidase 1B (mns1B) from Aspergillus clavatus (strain ATCC 1007 / CBS 513.65 / DSM 816 / NCTC 3887 / NRRL 1 / QM 1276 / 107).